A 242-amino-acid chain; its full sequence is ATP synthase subunit a, organellar chromatophore (242 aa).

Transmembrane regions (helical) follow at residues 28–48, 89–109, 128–148, 193–213, and 214–234; these read LHGQ…VLVI, LPFI…GALV, INTT…AGLS, LVVG…AMFL, and GLFT…NYIG.

Belongs to the ATPase A chain family. In terms of assembly, F-type ATPases have 2 components, CF(1) - the catalytic core - and CF(0) - the membrane proton channel. CF(1) has five subunits: alpha(3), beta(3), gamma(1), delta(1), epsilon(1). CF(0) has four main subunits: a, b, b' and c.

The protein resides in the plastid. It localises to the organellar chromatophore thylakoid membrane. Key component of the proton channel; it plays a direct role in the translocation of protons across the membrane. This Paulinella chromatophora protein is ATP synthase subunit a, organellar chromatophore.